Reading from the N-terminus, the 200-residue chain is Phospholipase A2 inhibitor CNF (200 aa).

The signal sequence occupies residues methionine 1 to serine 19. Disulfide bonds link cysteine 22/cysteine 46, cysteine 25/cysteine 32, cysteine 39/cysteine 67, cysteine 73/cysteine 94, cysteine 95/cysteine 100, cysteine 118/cysteine 143, cysteine 136/cysteine 165, and cysteine 169/cysteine 191. Asparagine 176 is a glycosylation site (N-linked (GlcNAc...) asparagine; partial).

Occurs as a mixture of oligomers. Tetrameric arrangement appears to be the predominant quaternary structure. Interacts with phospholipase A2 crotoxin basic subunit CBd; the interaction leads to dissociation of the CA-CB heterodimer and to inhibition of PLA2 activity of the CB subunit. Post-translationally, the carbohydrate moiety increases the inhibition capacity of CNF, but is not essential for activity and for oligomerization. Expressed by the liver.

Its subcellular location is the secreted. Functionally, inhibits the PLA2 activity of crotoxin (CTX) by replacing the acid subunit (CA) in the CTX complex. Displays a pro-inflammatory action through activation of important main signaling pathways for human leukocytes, in vitro. Abolishes both the muscle-paralyzing and muscle-damaging activities of CTX in mice phrenic nerve-diaphragm muscle preparations. This chain is Phospholipase A2 inhibitor CNF, found in Crotalus durissus terrificus (South American rattlesnake).